We begin with the raw amino-acid sequence, 274 residues long: Cytochrome b-c1 complex subunit Rieske, mitochondrial (274 aa).

Residues 79 to 103 (SHTDVKVPDFSEYRRLEVLDSTKSS) lie on the Mitochondrial matrix side of the membrane. Residues 104–140 (RESSEARKGFSYLVTGVTTVGVAYAAKNAVTQFVSSM) form a helical membrane-spanning segment. The Mitochondrial intermembrane segment spans residues 141–274 (SASADVLALA…FTSDDMVIVG (134 aa)). A Rieske domain is found at 187–272 (EAAVELSQLR…YEFTSDDMVI (86 aa)). Residues Cys-217, His-219, Cys-236, His-239, and Ser-241 each coordinate [2Fe-2S] cluster. Cysteines 222 and 238 form a disulfide.

Belongs to the Rieske iron-sulfur protein family. As to quaternary structure, component of the ubiquinol-cytochrome c oxidoreductase (cytochrome b-c1 complex, complex III, CIII), a multisubunit enzyme composed of 11 subunits. The complex is composed of 3 respiratory subunits cytochrome b, cytochrome c1 and Rieske protein UQCRFS1, 2 core protein subunits UQCRC1/QCR1 and UQCRC2/QCR2, and 6 low-molecular weight protein subunits UQCRH/QCR6, UQCRB/QCR7, UQCRQ/QCR8, UQCR10/QCR9, UQCR11/QCR10 and subunit 9, the cleavage product of Rieske protein UQCRFS1. The complex exists as an obligatory dimer and forms supercomplexes (SCs) in the inner mitochondrial membrane with NADH-ubiquinone oxidoreductase (complex I, CI) and cytochrome c oxidase (complex IV, CIV), resulting in different assemblies (supercomplex SCI(1)III(2)IV(1) and megacomplex MCI(2)III(2)IV(2)). Incorporation of the Rieske protein UQCRFS1 is the penultimate step in complex III assembly. Interacts with TTC19, which is involved in the clearance of UQCRFS1 fragments. Component of the ubiquinol-cytochrome c oxidoreductase (cytochrome b-c1 complex, complex III, CIII). Subunit 9 corresponds to the mitochondrial targeting sequence (MTS) of Rieske protein UQCRFS1. It is retained after processing and incorporated inside complex III, where it remains bound to the complex and localizes between the 2 core subunits UQCRC1/QCR1 and UQCRC2/QCR2. [2Fe-2S] cluster is required as a cofactor. Post-translationally, proteolytic processing is necessary for the correct insertion of UQCRFS1 in the complex III dimer. Several fragments are generated during UQCRFS1 insertion, most probably due to the endogenous matrix-processing peptidase (MPP) activity of the 2 core protein subunits UQCRC1/QCR1 and UQCRC2/QCR2, which are homologous to the 2 mitochondrial-processing peptidase (MPP) subunits beta-MPP and alpha-MPP respectively. The action of the protease is also necessary for the clearance of the UQCRFS1 fragments.

It localises to the mitochondrion inner membrane. The enzyme catalyses a quinol + 2 Fe(III)-[cytochrome c](out) = a quinone + 2 Fe(II)-[cytochrome c](out) + 2 H(+)(out). Component of the ubiquinol-cytochrome c oxidoreductase, a multisubunit transmembrane complex that is part of the mitochondrial electron transport chain which drives oxidative phosphorylation. The respiratory chain contains 3 multisubunit complexes succinate dehydrogenase (complex II, CII), ubiquinol-cytochrome c oxidoreductase (cytochrome b-c1 complex, complex III, CIII) and cytochrome c oxidase (complex IV, CIV), that cooperate to transfer electrons derived from NADH and succinate to molecular oxygen, creating an electrochemical gradient over the inner membrane that drives transmembrane transport and the ATP synthase. The cytochrome b-c1 complex catalyzes electron transfer from ubiquinol to cytochrome c, linking this redox reaction to translocation of protons across the mitochondrial inner membrane, with protons being carried across the membrane as hydrogens on the quinol. In the process called Q cycle, 2 protons are consumed from the matrix, 4 protons are released into the intermembrane space and 2 electrons are passed to cytochrome c. The Rieske protein is a catalytic core subunit containing a [2Fe-2S] iron-sulfur cluster. It cycles between 2 conformational states during catalysis to transfer electrons from the quinol bound in the Q(0) site in cytochrome b to cytochrome c1. Incorporation of UQCRFS1 is the penultimate step in complex III assembly. In terms of biological role, component of the ubiquinol-cytochrome c oxidoreductase (cytochrome b-c1 complex, complex III, CIII). UQCRFS1 undergoes proteolytic processing once it is incorporated in the complex III dimer. One of the fragments, called subunit 9, corresponds to its mitochondrial targeting sequence (MTS). The proteolytic processing is necessary for the correct insertion of UQCRFS1 in the complex III dimer, but the persistence of UQCRFS1-derived fragments may prevent newly imported UQCRFS1 to be processed and assembled into complex III and is detrimental for the complex III structure and function. The protein is Cytochrome b-c1 complex subunit Rieske, mitochondrial (UQCRFS1) of Pan paniscus (Pygmy chimpanzee).